Reading from the N-terminus, the 343-residue chain is Heat-inducible transcription repressor HrcA (343 aa).

This sequence belongs to the HrcA family.

Its function is as follows. Negative regulator of class I heat shock genes (grpE-dnaK-dnaJ and groELS operons). Prevents heat-shock induction of these operons. The protein is Heat-inducible transcription repressor HrcA of Thermoanaerobacter pseudethanolicus (strain ATCC 33223 / 39E) (Clostridium thermohydrosulfuricum).